The following is a 232-amino-acid chain: Small ribosomal subunit protein uS3 (232 aa).

The region spanning 39–107 is the KH type-2 domain; that stretch reads IREILHKELK…DVVINIVEIR (69 aa).

It belongs to the universal ribosomal protein uS3 family. Part of the 30S ribosomal subunit. Forms a tight complex with proteins S10 and S14.

Binds the lower part of the 30S subunit head. Binds mRNA in the 70S ribosome, positioning it for translation. The protein is Small ribosomal subunit protein uS3 of Rhodopseudomonas palustris (strain HaA2).